A 68-amino-acid polypeptide reads, in one-letter code: Wasabi receptor toxin (68 aa).

The N-terminal stretch at 1 to 21 is a signal peptide; sequence MKYFTLALTLLFLLLINPCKD. A propeptide spanning residues 22–35 is cleaved from the precursor; that stretch reads MNFAWAESSEKVER. Intrachain disulfides connect Cys44–Cys62 and Cys48–Cys58.

It belongs to the short scorpion toxin superfamily. Potassium channel inhibitor kappa-KTx family. Kappa-KTx 1 subfamily. As to quaternary structure, monomer. Expressed by the venom gland.

The protein resides in the secreted. The protein localises to the host cytoplasm. Functionally, cell-penetrating peptide (CPP) with defensive purpose that induces pain by specifically activating mammalian sensory neuron TRPA1 channels. It non-covalently binds to the same region than other TRPA1 agonists (irritants), but acts via a distinct biochemical mechanism. Its binding stabilizes the TRPA1 open state and diminishes calcium-permeability. Consequently, it produces pain and pain hypersensitivity, but fails to trigger efferent release of neuropeptides (CGRP) and neurogenic inflammation typically produced by noxious electrophiles. Is not active on voltage-gated potassium channels and other TRP channels. In Urodacus manicatus (Black rock scorpion), this protein is Wasabi receptor toxin.